The chain runs to 448 residues: Tapasin (448 aa).

Positions 1–20 (MKSLSLLLAVALGLATAVSA) are cleaved as a signal peptide. The Lumenal portion of the chain corresponds to 21-414 (GPAVIECWFV…LSGPSLEDSV (394 aa)). Cys-27 and Cys-91 are disulfide-bonded. Asn-253 carries an N-linked (GlcNAc...) asparagine glycan. Positions 292–399 (PKVSLMPATL…PASGRSAEVT (108 aa)) constitute an Ig-like C1-type domain. Cys-315 and Cys-382 are joined by a disulfide. A helical membrane pass occupies residues 415–435 (GLFLSAFLLLGLFKALGWAAV). The Cytoplasmic portion of the chain corresponds to 436–448 (YLSTCKDSKKKAE).

As to quaternary structure, heterodimer with PDIA3; disulfide-linked. Obligatory mediator for the interaction between newly assembled MHC class I molecules, calreticulin, PDIA3 and TAP. Up to 4 MHC class I/tapasin complexes bind to 1 TAP. Interacts with HLA-G-B2M complex; this interaction is required for loading of high affinity peptides. On its own or as part of MHC class I peptide loading complex, interacts with ligand-free MR1 or MR1-B2M complex, providing for stable MR1 pools ready for metabolite antigen processing. As to expression, neutrophils, mostly in fully differentiated cells.

The protein localises to the endoplasmic reticulum membrane. Its function is as follows. Involved in the association of MHC class I with transporter associated with antigen processing (TAP) and in the assembly of MHC class I with peptide (peptide loading). The protein is Tapasin of Homo sapiens (Human).